A 124-amino-acid chain; its full sequence is Small ribosomal subunit protein uS12 (124 aa).

Position 89 is a 3-methylthioaspartic acid (aspartate 89). Positions 102-124 (LDTSGVNNRKHGRSKYGTKRPKS) are disordered. Over residues 109–124 (NRKHGRSKYGTKRPKS) the composition is skewed to basic residues.

This sequence belongs to the universal ribosomal protein uS12 family. In terms of assembly, part of the 30S ribosomal subunit. Contacts proteins S8 and S17. May interact with IF1 in the 30S initiation complex.

Functionally, with S4 and S5 plays an important role in translational accuracy. Interacts with and stabilizes bases of the 16S rRNA that are involved in tRNA selection in the A site and with the mRNA backbone. Located at the interface of the 30S and 50S subunits, it traverses the body of the 30S subunit contacting proteins on the other side and probably holding the rRNA structure together. The combined cluster of proteins S8, S12 and S17 appears to hold together the shoulder and platform of the 30S subunit. The sequence is that of Small ribosomal subunit protein uS12 from Francisella philomiragia subsp. philomiragia (strain ATCC 25017 / CCUG 19701 / FSC 153 / O#319-036).